The chain runs to 34 residues: Calcitonin-like peptide 2 (34 aa).

Cysteines 2 and 7 form a disulfide. F34 carries the phenylalanine amide modification.

The sequence is that of Calcitonin-like peptide 2 from Odorrana schmackeri (Schmacker's frog).